We begin with the raw amino-acid sequence, 622 residues long: Low affinity potassium transport system protein Kup (622 aa).

12 consecutive transmembrane segments (helical) span residues 9–29 (LPAI…TSPL), 49–69 (VFGF…IKYL), 103–123 (VIMG…TPAI), 137–157 (PQLD…LFMI), 165–185 (VGKL…GLGL), 213–233 (VSFI…ALYA), 247–267 (WFTV…ALLL), 276–296 (PFFL…AALA), 337–357 (IYIP…IVSF), 363–383 (LAAA…ILST), 396–416 (FVAL…TANL), and 419–439 (LLSG…VMTT).

It belongs to the HAK/KUP transporter (TC 2.A.72) family.

The protein resides in the cell inner membrane. It carries out the reaction K(+)(in) + H(+)(in) = K(+)(out) + H(+)(out). Its function is as follows. Responsible for the low-affinity transport of potassium into the cell. Likely operates as a K(+):H(+) symporter. The chain is Low affinity potassium transport system protein Kup from Escherichia fergusonii (strain ATCC 35469 / DSM 13698 / CCUG 18766 / IAM 14443 / JCM 21226 / LMG 7866 / NBRC 102419 / NCTC 12128 / CDC 0568-73).